A 542-amino-acid polypeptide reads, in one-letter code: Phenylacetone monooxygenase (542 aa).

Residues S27, E46, 54–57 (VWYW), D66, Y72, V119, and Q152 each bind FAD. 64 to 66 (RCD) contributes to the NADP(+) binding site. NADP(+)-binding positions include 194 to 200 (TGSSGIQ), 217 to 218 (RT), and 336 to 337 (KR). M446 contacts FAD. W501 lines the NADP(+) pocket.

It belongs to the FAD-binding monooxygenase family. In terms of assembly, monomer. FAD is required as a cofactor.

The catalysed reaction is phenylacetone + NADPH + O2 + H(+) = benzyl acetate + NADP(+) + H2O. Functionally, catalyzes a Baeyer-Villiger oxidation reaction, i.e. the insertion of an oxygen atom into a carbon-carbon bond adjacent to a carbonyl, which converts ketones to esters. Is most efficient with phenylacetone as substrate, leading to the formation of benzyl acetate. Can also oxidize other aromatic ketones (benzylacetone, alpha-methylphenylacetone and 4-hydroxyacetophenone), some aliphatic ketones (dodecan-2-one and bicyclohept-2-en-6-one) and sulfides (e.g. methyl 4-tolylsulfide). This chain is Phenylacetone monooxygenase (pamO), found in Thermobifida fusca (strain YX).